The primary structure comprises 478 residues: BTB/POZ domain-containing protein 17 (478 aa).

A signal peptide spans 1 to 28 (MLRKGSCKPGSWGSFWAILALVGLVTRA). Residues asparagine 61, asparagine 100, asparagine 195, and asparagine 307 are each glycosylated (N-linked (GlcNAc...) asparagine). Residues 63–132 (SDVILRVQAV…LYCGELTVLL (70 aa)) form the BTB domain. The BACK domain maps to 169–269 (AVGWYHYAVS…IPPAQLFQLQ (101 aa)).

The protein localises to the secreted. This Mus musculus (Mouse) protein is BTB/POZ domain-containing protein 17 (Btbd17).